The primary structure comprises 292 residues: Inositol monophosphatase 2 (292 aa).

E75, D94, I96, D97, and D231 together coordinate Mg(2+). Substrate is bound at residue E75. Residues 96-99 and D231 each bind substrate; that span reads IDGT.

Belongs to the inositol monophosphatase superfamily. Mg(2+) serves as cofactor.

The enzyme catalyses a myo-inositol phosphate + H2O = myo-inositol + phosphate. It functions in the pathway polyol metabolism; myo-inositol biosynthesis; myo-inositol from D-glucose 6-phosphate: step 2/2. With respect to regulation, inhibited by Li(+) and Na(+). Functionally, responsible for the provision of inositol required for synthesis of phosphatidylinositol and polyphosphoinositides and involved in the inositol cycle of calcium signaling. The sequence is that of Inositol monophosphatase 2 (INM2) from Saccharomyces cerevisiae (strain ATCC 204508 / S288c) (Baker's yeast).